Reading from the N-terminus, the 162-residue chain is 2-C-methyl-D-erythritol 2,4-cyclodiphosphate synthase (162 aa).

A divalent metal cation is bound by residues aspartate 12 and histidine 14. Residues 12 to 14 and 38 to 39 contribute to the 4-CDP-2-C-methyl-D-erythritol 2-phosphate site; these read DVH and HS. Histidine 46 is an a divalent metal cation binding site. Residues 60-62, 65-69, and arginine 146 contribute to the 4-CDP-2-C-methyl-D-erythritol 2-phosphate site; these read DIG and FPDTD.

The protein belongs to the IspF family. As to quaternary structure, homotrimer. A divalent metal cation serves as cofactor.

It carries out the reaction 4-CDP-2-C-methyl-D-erythritol 2-phosphate = 2-C-methyl-D-erythritol 2,4-cyclic diphosphate + CMP. It participates in isoprenoid biosynthesis; isopentenyl diphosphate biosynthesis via DXP pathway; isopentenyl diphosphate from 1-deoxy-D-xylulose 5-phosphate: step 4/6. Functionally, involved in the biosynthesis of isopentenyl diphosphate (IPP) and dimethylallyl diphosphate (DMAPP), two major building blocks of isoprenoid compounds. Catalyzes the conversion of 4-diphosphocytidyl-2-C-methyl-D-erythritol 2-phosphate (CDP-ME2P) to 2-C-methyl-D-erythritol 2,4-cyclodiphosphate (ME-CPP) with a corresponding release of cytidine 5-monophosphate (CMP). This is 2-C-methyl-D-erythritol 2,4-cyclodiphosphate synthase from Bordetella parapertussis (strain 12822 / ATCC BAA-587 / NCTC 13253).